A 506-amino-acid chain; its full sequence is 2,3-bisphosphoglycerate-independent phosphoglycerate mutase (506 aa).

Positions 12 and 63 each coordinate Mn(2+). Ser63 (phosphoserine intermediate) is an active-site residue. Substrate-binding positions include His122, 151-152, Arg182, Arg188, 253-256, and Lys323; these read RD and RADR. Residues Asp390, His394, Asp432, His433, and His451 each contribute to the Mn(2+) site.

The protein belongs to the BPG-independent phosphoglycerate mutase family. As to quaternary structure, monomer. The cofactor is Mn(2+).

It carries out the reaction (2R)-2-phosphoglycerate = (2R)-3-phosphoglycerate. The protein operates within carbohydrate degradation; glycolysis; pyruvate from D-glyceraldehyde 3-phosphate: step 3/5. Its function is as follows. Catalyzes the interconversion of 2-phosphoglycerate and 3-phosphoglycerate. The protein is 2,3-bisphosphoglycerate-independent phosphoglycerate mutase of Wolbachia pipientis wMel.